The sequence spans 270 residues: Fibroblast growth factor 5 (270 aa).

A signal peptide spans 1 to 20; it reads MSLSFLLLLFLSHLILSAWA. Residues 25–86 are disordered; it reads RLAPKGQPGP…EQSSFQWSPS (62 aa). The segment covering 41–69 has biased composition (low complexity); that stretch reads PGGASSRRSSSSTATSSSSPASSSSAASR. Residues 76-86 show a composition bias toward polar residues; that stretch reads LEQSSFQWSPS. A glycan (N-linked (GlcNAc...) asparagine) is linked at Asn112. The segment at 237–257 is disordered; it reads EKKKPPNPVKPKVPLSAPRRS.

Belongs to the heparin-binding growth factors family. In terms of assembly, interacts with FGFR1 and FGFR2. Affinity between fibroblast growth factors (FGFs) and their receptors is increased by heparan sulfate glycosaminoglycans that function as coreceptors.

It localises to the secreted. Plays an important role in the regulation of cell proliferation and cell differentiation. Required for normal regulation of the hair growth cycle. Functions as an inhibitor of hair elongation by promoting progression from anagen, the growth phase of the hair follicle, into catagen the apoptosis-induced regression phase. The sequence is that of Fibroblast growth factor 5 (FGF5) from Bos taurus (Bovine).